Consider the following 582-residue polypeptide: MDCLTDLRSTEGKVDQAGKTLILLVVWWGFGTTAEGHPLQQLWELPCDCSGGYVSPDLPITPTPSIAVASPLPDLRVWLQGSWGWGGGFRQQWECVFKPKIIPSVQEQPGPCECLTIATQMHSTCYEKAQECTLLGKTYFTAILQKTKLGSYEDGPNKLLQASCTGIWETSMLGPRCPCVCLDGGGPTDRFGRICAEGLEEIIRHSYPSVQYHPLALPRPRGVDLDPQTSDILEATHQVLNATNPQLAENCWLCMTLGTQSPQPSRRMAMSLSMEIAVLASLSGATHRVNRCQLLCREADNRTGIPVGYVHFTNCTSIQESLTRRVIYEILRDYVLHRVMYLCVEQHAYTALPNKWIGLCILASIVPDMSIIPGEEPIPLPSIEYTAGRHKRAVQFIPLLVGLGITGATLAGGTGLGVSVHTYHKLSNQLIEDVQALSGTINDLQDQIDSLAEVVLQNRRGLDLLTAEQGGICLALQEKCCFYANKSGIVRDKIRKLQEDLLARKRALYDNPLWNGLNGFLPYLLPSLGPLFGLILFLTLGPCIRKTLTRIIHDKIQGSKNPRISPAVQATPNRDGYPRSMV.

The N-terminal stretch at 1–35 (MDCLTDLRSTEGKVDQAGKTLILLVVWWGFGTTAE) is a signal peptide. Over 36–519 (GHPLQQLWEL…DNPLWNGLNG (484 aa)) the chain is Extracellular. N-linked (GlcNAc...) asparagine; by host glycosylation occurs at asparagine 241. The CXXC motif lies at 251–254 (CWLC). 3 disulfides stabilise this stretch: cysteine 251–cysteine 254, cysteine 251–cysteine 481, and cysteine 473–cysteine 480. 2 N-linked (GlcNAc...) asparagine; by host glycosylation sites follow: asparagine 301 and asparagine 314. The segment at 396 to 416 (FIPLLVGLGITGATLAGGTGL) is fusion peptide. Coiled coils occupy residues 417-467 (GVSV…LLTA) and 477-513 (QEKC…DNPL). The tract at residues 456–472 (LQNRRGLDLLTAEQGGI) is immunosuppression. Residues 473–481 (CLALQEKCC) carry the CX6CC motif. Residue asparagine 485 is glycosylated (N-linked (GlcNAc...) asparagine; by host). A helical membrane pass occupies residues 520–540 (FLPYLLPSLGPLFGLILFLTL). The Cytoplasmic portion of the chain corresponds to 541–582 (GPCIRKTLTRIIHDKIQGSKNPRISPAVQATPNRDGYPRSMV). The S-palmitoyl cysteine; by host moiety is linked to residue cysteine 543. The span at 562–572 (PRISPAVQATP) shows a compositional bias: polar residues. The disordered stretch occupies residues 562-582 (PRISPAVQATPNRDGYPRSMV).

As to quaternary structure, the mature envelope protein (Env) consists of a trimer of SU-TM heterodimers attached by a labile interchain disulfide bond. Specific enzymatic cleavages in vivo yield mature proteins. Envelope glycoproteins are synthesized as an inactive precursor that is N-glycosylated and processed likely by host cell furin or by a furin-like protease in the Golgi to yield the mature SU and TM proteins. The cleavage site between SU and TM requires the minimal sequence [KR]-X-[KR]-R. Post-translationally, the CXXC motif is highly conserved across a broad range of retroviral envelope proteins. It is thought to participate in the formation of a labile disulfide bond possibly with the CX6CC motif present in the transmembrane protein. Isomerization of the intersubunit disulfide bond to an SU intrachain disulfide bond is thought to occur upon receptor recognition in order to allow membrane fusion. In terms of processing, the transmembrane protein is palmitoylated.

It is found in the virion membrane. The protein resides in the host cell membrane. In terms of biological role, the surface protein (SU) attaches the virus to the host cell by binding to its receptor. This interaction triggers the refolding of the transmembrane protein (TM) and is thought to activate its fusogenic potential by unmasking its fusion peptide. Fusion occurs at the host cell plasma membrane. Functionally, the transmembrane protein (TM) acts as a class I viral fusion protein. Under the current model, the protein has at least 3 conformational states: pre-fusion native state, pre-hairpin intermediate state, and post-fusion hairpin state. During viral and target cell membrane fusion, the coiled coil regions (heptad repeats) assume a trimer-of-hairpins structure, positioning the fusion peptide in close proximity to the C-terminal region of the ectodomain. The formation of this structure appears to drive apposition and subsequent fusion of viral and target cell membranes. Membranes fusion leads to delivery of the nucleocapsid into the cytoplasm. This Galliformes protein is Envelope glycoprotein (env).